A 169-amino-acid polypeptide reads, in one-letter code: Ribosome maturation factor RimM (169 aa).

The PRC barrel domain maps to 97–169; sequence PGEYYWYQLI…VITVDWDMNF (73 aa).

Belongs to the RimM family. In terms of assembly, binds ribosomal protein uS19.

It localises to the cytoplasm. An accessory protein needed during the final step in the assembly of 30S ribosomal subunit, possibly for assembly of the head region. Essential for efficient processing of 16S rRNA. May be needed both before and after RbfA during the maturation of 16S rRNA. It has affinity for free ribosomal 30S subunits but not for 70S ribosomes. The polypeptide is Ribosome maturation factor RimM (Legionella pneumophila subsp. pneumophila (strain Philadelphia 1 / ATCC 33152 / DSM 7513)).